The primary structure comprises 1363 residues: ABC multidrug transporter MDR2 (1363 aa).

The helical transmembrane segment at 65-85 (IALIVIGTIAGIGAGIPFPLL) threads the bilayer. The ABC transmembrane type-1 1 domain maps to 69 to 367 (VIGTIAGIGA…MAPFMHIFAS (299 aa)). A glycan (N-linked (GlcNAc...) asparagine) is linked at Asn-97. The next 5 membrane-spanning stretches (helical) occupy residues 119-139 (VLQV…HTGC), 193-213 (KVGL…VAFL), 215-235 (VATI…MAFG), 301-321 (IQFG…FWQG), and 336-356 (VSVG…FVLS). The region spanning 403–682 (IELQDVTFNY…DGVYAGMVRL (280 aa)) is the ABC transporter 1 domain. 438–445 (GTSGSGKS) is an ATP binding site. N-linked (GlcNAc...) asparagine glycans are attached at residues Asn-552 and Asn-633. The disordered stretch occupies residues 738–758 (YMPEEADSLPTEPENEKEKPK). 3 consecutive transmembrane segments (helical) span residues 781-801 (LGLI…VIFG), 820-840 (GMLF…AVIV), and 896-916 (LTGT…AGVI). The 272-residue stretch at 781–1052 (LGLITSIMIG…MFALVPDISK (272 aa)) folds into the ABC transmembrane type-1 2 domain. N-linked (GlcNAc...) asparagine glycosylation occurs at Asn-973. 2 helical membrane-spanning segments follow: residues 992–1012 (FWLS…YWWG) and 1016–1036 (ILAG…LLFS). Residues 1119–1358 (VQFRNVHFRY…CESYRANVIH (240 aa)) enclose the ABC transporter 2 domain. 1154 to 1161 (GPSGSGKS) contributes to the ATP binding site.

The protein belongs to the ABC transporter superfamily. ABCB family. Multidrug resistance exporter (TC 3.A.1.201) subfamily.

Its subcellular location is the cell membrane. Its function is as follows. Pleiotropic ABC efflux transporter that may be involved in the modulation susceptibility to a wide range of unrelated cytotoxic compounds. In Trichophyton tonsurans (strain CBS 112818) (Scalp ringworm fungus), this protein is ABC multidrug transporter MDR2.